The sequence spans 330 residues: Zinc finger protein Gfi-1b (330 aa).

The tract at residues 1-20 is SNAG domain; the sequence is MPRSFLVKSKKAHTYHQPRV. The tract at residues 1–42 is disordered; sequence MPRSFLVKSKKAHTYHQPRVQEDEPLWPPALTPVPRDQAPSN. Residue K8 is modified to N6,N6-dimethyllysine. The segment at 91-330 is interaction with ARIH2; sequence GDSPLSDSPP…RHRESQHNLK (240 aa). C2H2-type zinc fingers lie at residues 163 to 186, 192 to 214, 220 to 242, 248 to 270, 276 to 298, and 304 to 327; these read YHCV…RRSH, FACD…THVH, FECR…LLIH, YPCQ…TYIH, HKCQ…SRKH, and FSCE…ESQH. The tract at residues 164 to 330 is mediates interaction with GATA1; the sequence is HCVKCNKVFS…RHRESQHNLK (167 aa).

In terms of assembly, component of a RCOR-GFI-KDM1A-HDAC complex. Interacts directly with RCOR1, KDM1A and HDAC2. Forms a complex with GATA1. Interacts with histone methyltransferases EHMT2 and SUV39H1. Interacts with ARIH2 (via RING-type 2). Interacts with RUNX1T1. Post-translationally, methylation at Lys-8 in the SNAG domain seems required for the recruitment of the corepressor complex. In terms of tissue distribution, expressed in bone marrow and fetal liver, but also detectable in fetal spleen, fetal thymus, and testes. Detected in hematopoietic stem cells, erythroblasts, and megakaryocytes. Overexpressed in bone marrow of patients with erythroleukemia and megakaryocytic leukemia as well as in their corresponding leukemic cell lines, and markedly repressed in severe aplastic anemia (SAA).

The protein localises to the nucleus. Its function is as follows. Essential proto-oncogenic transcriptional regulator necessary for development and differentiation of erythroid and megakaryocytic lineages. Component of a RCOR-GFI-KDM1A-HDAC complex that suppresses, via histone deacetylase (HDAC) recruitment, a number of genes implicated in multilineage blood cell development and controls hematopoietic differentiation. Transcriptional repressor or activator depending on both promoter and cell type context; represses promoter activity of SOCS1 and SOCS3 and thus, may regulate cytokine signaling pathways. Cooperates with GATA1 to repress target gene transcription, such as the apoptosis regulator BCL2L1; GFI1B silencing in leukemic cell lines markedly increase apoptosis rate. Inhibits down-regulation of MYC and MYB as well as the cyclin-dependent kinase inhibitor CDKN1A/P21WAF1 in IL6-treated myelomonocytic cells. Represses expression of GATA3 in T-cell lymphomas and inhibits GATA1-mediated transcription; as GATA1 also mediates erythroid GFI1B transcription, both GATA1 and GFI1B participate in a feedback regulatory pathway controlling the expression of GFI1B gene in erythroid cells. Suppresses GATA1-mediated stimulation of GFI1B promoter through protein interaction. Binds to gamma-satellite DNA and to its own promoter, auto-repressing its own expression. Alters histone methylation by recruiting histone methyltransferase to target genes promoters. Plays a role in heterochromatin formation. The polypeptide is Zinc finger protein Gfi-1b (GFI1B) (Homo sapiens (Human)).